We begin with the raw amino-acid sequence, 330 residues long: Src kinase-associated phosphoprotein 2-B (330 aa).

Residues 57–84 (DKAEDDDQEENDGFPLPPDAVSLASDRD) form a disordered region. A compositionally biased stretch (acidic residues) spans 59 to 68 (AEDDDQEEND). Residues 105 to 208 (EYLKAGYLEK…WINAIMNSRG (104 aa)) form the PH domain. The segment at 236 to 261 (ELPEESEKPVTETETQKATPVPVNNT) is disordered. A compositionally biased stretch (basic and acidic residues) spans 240–250 (ESEKPVTETET). Positions 251-261 (QKATPVPVNNT) are enriched in polar residues. Residues 268–329 (DYANFYRGLW…PKAYIIEMYD (62 aa)) form the SH3 domain.

Belongs to the SKAP family. In terms of processing, phosphorylated on tyrosines.

The protein localises to the cytoplasm. May be involved in B-cell and macrophage adhesion processes. May play a role in src signaling pathway. The protein is Src kinase-associated phosphoprotein 2-B (skap2-b) of Xenopus laevis (African clawed frog).